The primary structure comprises 429 residues: U3 small nucleolar RNA-associated protein 18 homolog (429 aa).

4 WD repeats span residues 117–156, 295–336, 345–386, and 392–428; these read RYTR…KKDR, TDDG…NSTN, NLVT…TFKN, and GKVT…HFTD.

Belongs to the WD repeat UTP18 family.

The protein localises to the nucleus. It localises to the nucleolus. Involved in nucleolar processing of pre-18S ribosomal RNA. This is U3 small nucleolar RNA-associated protein 18 homolog from Caenorhabditis elegans.